A 601-amino-acid polypeptide reads, in one-letter code: Serine/threonine-protein phosphatase 2A 65 kDa regulatory subunit A beta isoform (601 aa).

Position 2 is an N-acetylalanine (A2). HEAT repeat units lie at residues 20–58 (DSLY…GVER), 59–96 (TRSE…GGPD), 97–135 (FAHC…TPVA), 136–173 (LEAY…ASNA), 174–212 (VKAE…ELDS), 213–251 (VKSE…SQDD), 252–290 (LETL…GPKI), 291–333 (TLND…RETI), 334–372 (IMNQ…GKEN), 373–411 (TIEH…GIRQ), 412–450 (LSQS…GVEF), 451–489 (FDEK…GTEW), 490–528 (AQNT…GQEI), 529–567 (TTKQ…DTNA), and 568–601 (LQGE…LALA).

It belongs to the phosphatase 2A regulatory subunit A family. PP2A consists of a common heterodimeric core enzyme, composed of a 36 kDa catalytic subunit (subunit C) and a 65 kDa constant regulatory subunit (PR65 or subunit A), that associates with a variety of regulatory subunits. Proteins that associate with the core dimer include three families of regulatory subunits B (the R2/B/PR55/B55, R3/B''/PR72/PR130/PR59 and R5/B'/B56 families), the 48 kDa variable regulatory subunit, viral proteins, and cell signaling molecules. Interacts with IPO9. Interacts with SGO1. Interacts with RAF1.

In terms of biological role, the PR65 subunit of protein phosphatase 2A serves as a scaffolding molecule to coordinate the assembly of the catalytic subunit and a variable regulatory B subunit. The chain is Serine/threonine-protein phosphatase 2A 65 kDa regulatory subunit A beta isoform (PPP2R1B) from Homo sapiens (Human).